The sequence spans 293 residues: Adenylyl-sulfate kinase 2, chloroplastic (293 aa).

The N-terminal 59 residues, 1-59 (MEGLAIRASRPSVFCSIPGLGGDSHRKPPSDGFLKLPASSIPADSRKLVANSTSFHPIS), are a transit peptide targeting the chloroplast. 122 to 130 (GLSGSGKST) serves as a coordination point for ATP. Substrate contacts are provided by residues aspartate 152, arginine 155, arginine 169, asparagine 172, 195–196 (IS), and glycine 245. Residue serine 196 is the Phosphoserine intermediate of the active site.

It belongs to the APS kinase family. As to quaternary structure, interacts with APK1. In terms of tissue distribution, expressed in root vasculature, root tips, leaf epidermal cells and funiculus of developing seeds.

The protein localises to the plastid. It is found in the chloroplast. It carries out the reaction adenosine 5'-phosphosulfate + ATP = 3'-phosphoadenylyl sulfate + ADP + H(+). It participates in sulfur metabolism; hydrogen sulfide biosynthesis; sulfite from sulfate: step 2/3. Its function is as follows. Catalyzes the synthesis of activated sulfate. Essential for plant reproduction and viability. Required for the production of glucosinolates. The polypeptide is Adenylyl-sulfate kinase 2, chloroplastic (APK2) (Arabidopsis thaliana (Mouse-ear cress)).